Here is a 764-residue protein sequence, read N- to C-terminus: Protective antigen (764 aa).

The signal sequence occupies residues 1 to 29 (MKKRKVLIPLMALSTILVSSTGNLEVIQA). Residues 30 to 287 (EVKQENRLLN…PEARHPLVAA (258 aa)) are domain 1, calcium-binding; LF and EF binding sites. The PA14 domain maps to 43 to 179 (SSSQGLLGYY…NKKEVISSDN (137 aa)). Residues 176–214 (SSDNLQLPELKQKSSNSRKKRSTSAGPTVPDRDNDGIPD) form a disordered region. Residues Asp-206, Asp-208, Asp-210, Ile-212, and Glu-217 each contribute to the Ca(2+) site. The alpha-clamp stretch occupies residues 231-239 (FLSPWISNI). Residues Ser-251, Lys-254, and Asp-264 each coordinate Ca(2+). Residues 288 to 516 (YPIVHVDMEN…SEVLPQIQET (229 aa)) are domain 2, membrane insertion and heptamerization. The segment at 302–333 (KNEDQSTQNTDSQTRTISKNTSTSRTHTSEVH) is disordered. The span at 306-327 (QSTQNTDSQTRTISKNTSTSRT) shows a compositional bias: polar residues. Beta stranded transmembrane passes span 331-342 (EVHGNAEVHASF) and 345-354 (IGGSVSAGFS). The interval 517–624 (TARIIFNGKD…KMNILIRDKR (108 aa)) is domain 3, heptamerization. Residues 625 to 764 (FHYDRNNIAV…IFSKKGYEIG (140 aa)) form a domain 4, binding to the receptor region.

Belongs to the bacterial binary toxin family. Interacts with host ANTXR1 and ANTXR2. As to quaternary structure, homooligomer; homooligomerizes to form homoheptamers (PA-63(7)) or homooctamers (PA-63(8)). PA-63(7) or PA-63(8) form ring-shaped oligomers that are in a pre-pore conformation, which do not penetrate the host membrane. PA-63(8) displays an enhanced stability, suggesting that this form circulates in the blood to reach and exert toxicity even in distant tissues. Interacts with lethal factor (LF) and edema factor (EF); can bind LF and EF simultaneously and interaction takes place following homooligomerization on the host cell membrane. PA-63(7) homoheptamer interacts with three molecules of LF to form the PA(7)LF(3) complex, in which the relative position of the N-terminal alpha-helices in the three LFs determines which factor is translocated first. Post-translationally, proteolytic activation by FURIN cleaves the protein in two parts, PA-20 and PA-63; the latter is the mature protein. The cleavage occurs at the cell surface and probably in the serum of infected animals as well; both native and cleaved PA are able to bind to the cell receptor. The release of PA-20 from the remaining receptor-bound PA-63 exposes the binding site for EF and LF, and promotes oligomerization and internalization of the protein.

The protein resides in the secreted. Its subcellular location is the host cell membrane. The protein localises to the host endosome membrane. In terms of biological role, protective antigen constitutes one of the three proteins composing the anthrax toxin; it mediates attachment to host cells and translocation of edema factor (EF) and lethal factor (LF) into the host cytoplasm. PA associated with LF forms the lethal toxin (LeTx) and causes death when injected; PA associated with EF forms the edema toxin (EdTx) and produces edema. PA induces immunity to infection with anthrax. Mediates the attachment to host cells by binding host cell receptors ANTXR1 and ANTXR2. Following host cell surface attachment, PA is cleaved by FURIN to generate the PA-63 (Protective antigen PA-63) form, which constitutes the mature form of the protein that oligomerizes and forms a pore to translocate the enzymatic toxin components edema factor (EF) and lethal factor (LF) into the host cytosol. Its function is as follows. Mature form that oligomerizes and forms a pore to translocate the enzymatic toxin components edema factor (EF) and lethal factor (LF) into the host cytosol. Following attachment to host cell receptors and cleavage by FURIN, homooligomerizes to form ring-shaped oligomers that are in a pre-pore conformation, and associates with EF and LF. Toxin-leaded complexes are then endocytosed in a clathrin-dependent process, followed by a conformational change of oligomerized PA-63 from the pre-pore to pore state, which is triggered by the low pH in the endosome. Once active, the pore mediates unfolding of EF and LF, which pass through the pore and translocate into the host cytosol. The chain is Protective antigen (pagA) from Bacillus anthracis.